Reading from the N-terminus, the 208-residue chain is NAD(P)H-quinone oxidoreductase subunit I (208 aa).

2 consecutive 4Fe-4S ferredoxin-type domains span residues 55 to 84 (GRIH…VDWV) and 95 to 124 (RNYS…MTEE). 8 residues coordinate [4Fe-4S] cluster: C64, C67, C70, C74, C104, C107, C110, and C114.

Belongs to the complex I 23 kDa subunit family. As to quaternary structure, NDH-1 is composed of at least 11 different subunits. Requires [4Fe-4S] cluster as cofactor.

It is found in the cellular thylakoid membrane. The enzyme catalyses a plastoquinone + NADH + (n+1) H(+)(in) = a plastoquinol + NAD(+) + n H(+)(out). It carries out the reaction a plastoquinone + NADPH + (n+1) H(+)(in) = a plastoquinol + NADP(+) + n H(+)(out). In terms of biological role, NDH-1 shuttles electrons from an unknown electron donor, via FMN and iron-sulfur (Fe-S) centers, to quinones in the respiratory and/or the photosynthetic chain. The immediate electron acceptor for the enzyme in this species is believed to be plastoquinone. Couples the redox reaction to proton translocation, and thus conserves the redox energy in a proton gradient. This is NAD(P)H-quinone oxidoreductase subunit I from Prochlorococcus marinus (strain MIT 9312).